The sequence spans 397 residues: MTASAPITQDVLTLPRKEPEGGKINLVGLTRDRMRAVLIENGTPEKQAKMRVGQIWQWIYQWGVRDFAEMTNLAKAYRAQLEETFEIRIPEVVSKQVSTDGTRKYLVRINGGHEVEVVYIPEDDRGTLCISSQVGCTLTCSFCHTGTQKLVRNLTPAEIIGQVMMARDDLEEWPTPGAPKDETRLLSNIVLMGMGEPLYNFDNVRDAMKIAMDPEGISLSRRRITLSTSGVVPEIARTAEEIGCLLAISFHATTNEVRDVLVPINRRWNIDELLQALADYPKVSNSERITFEYVMLDGVNDSDEDAHRLLDHIKRHNIPAKINLIPFNEWPGAPYKRSSNNRIRAFANIIYQAGYASPIRKTRGDDIMAACGQLKSATERARKSRKQIEAEAGVNNS.

Catalysis depends on glutamate 116, which acts as the Proton acceptor. Positions 122-366 (EDDRGTLCIS…SPIRKTRGDD (245 aa)) constitute a Radical SAM core domain. A disulfide bridge links cysteine 129 with cysteine 371. Cysteine 136, cysteine 140, and cysteine 143 together coordinate [4Fe-4S] cluster. S-adenosyl-L-methionine-binding positions include 195-196 (GE), serine 227, 249-251 (SFH), and asparagine 328. The active-site S-methylcysteine intermediate is the cysteine 371.

This sequence belongs to the radical SAM superfamily. RlmN family. [4Fe-4S] cluster is required as a cofactor.

The protein resides in the cytoplasm. It carries out the reaction adenosine(2503) in 23S rRNA + 2 reduced [2Fe-2S]-[ferredoxin] + 2 S-adenosyl-L-methionine = 2-methyladenosine(2503) in 23S rRNA + 5'-deoxyadenosine + L-methionine + 2 oxidized [2Fe-2S]-[ferredoxin] + S-adenosyl-L-homocysteine. It catalyses the reaction adenosine(37) in tRNA + 2 reduced [2Fe-2S]-[ferredoxin] + 2 S-adenosyl-L-methionine = 2-methyladenosine(37) in tRNA + 5'-deoxyadenosine + L-methionine + 2 oxidized [2Fe-2S]-[ferredoxin] + S-adenosyl-L-homocysteine. Functionally, specifically methylates position 2 of adenine 2503 in 23S rRNA and position 2 of adenine 37 in tRNAs. m2A2503 modification seems to play a crucial role in the proofreading step occurring at the peptidyl transferase center and thus would serve to optimize ribosomal fidelity. The protein is Dual-specificity RNA methyltransferase RlmN of Ruegeria sp. (strain TM1040) (Silicibacter sp.).